The sequence spans 488 residues: Annexin A7 (488 aa).

Pro residues predominate over residues 1-18 (MSYPGYPPTGYPPFPGYP). 2 disordered regions span residues 1–49 (MSYP…YPQV) and 71–143 (GYPG…PTYP). A repeat-rich region region spans residues 1-143 (MSYPGYPPTG…QYPGGQPTYP (143 aa)). Residues 5–20 (GYPPTGYPPFPGYPPA) are 3 X 5 AA tandem repeats of G-Y-P-P-X. Positions 89 to 102 (PGQGFGVPPGGAGF) are enriched in gly residues. Annexin repeat units lie at residues 185–256 (FDAI…ALFM), 257–328 (PPTY…SMCQ), 340–412 (QMAQ…TILQ), and 416–487 (NRPA…AIVG). At K233 the chain carries N6-acetyllysine.

This sequence belongs to the annexin family. In terms of assembly, interacts with PDCD6. Isoform 1 is expressed in brain, heart and skeletal muscle. Isoform 2 is more abundant in liver, lung, kidney, spleen, fibroblasts and placenta.

Its function is as follows. Calcium/phospholipid-binding protein which promotes membrane fusion and is involved in exocytosis. This is Annexin A7 (ANXA7) from Homo sapiens (Human).